A 61-amino-acid polypeptide reads, in one-letter code: Potassium channel toxin alpha-KTx 6.7 (61 aa).

An N-terminal signal peptide occupies residues 1-23 (MNAKFILLLLVVTTTMLLPDTQG). Cystine bridges form between C29–C50, C35–C55, C39–C57, and C45–C60. Cysteine amide is present on C60.

The protein belongs to the short scorpion toxin superfamily. Potassium channel inhibitor family. Alpha-KTx 06 subfamily. Expressed by the venom gland.

The protein resides in the secreted. Its function is as follows. Blocker of voltage-gated potassium channels. The sequence is that of Potassium channel toxin alpha-KTx 6.7 from Opistophthalmus carinatus (African yellow leg scorpion).